Reading from the N-terminus, the 969-residue chain is Liprin-beta-1 (969 aa).

Ser-37 carries the post-translational modification Phosphoserine. Thr-39 carries the phosphothreonine modification. Ser-40 is modified (phosphoserine). Positions 99 to 310 (GDVYQERLAR…CLSRYRKMQD (212 aa)) form a coiled coil. Lys-291 carries the N6-acetyllysine modification. Disordered stretches follow at residues 342–361 (DLER…RDLL), 381–407 (LLPP…FEEG), and 424–482 (GVST…RKAR). Positions 346-358 (STSSTPGMGSPSR) are enriched in low complexity. A phosphoserine mark is found at Ser-403 and Ser-435. Positions 426-438 (STSSLQKSSSLGN) are enriched in low complexity. Positions 439 to 452 (LKKEASDGTDKAPT) are enriched in basic and acidic residues. Lys-440 is covalently cross-linked (Glycyl lysine isopeptide (Lys-Gly) (interchain with G-Cter in SUMO2)). A Phosphoserine modification is found at Ser-500. The span at 518 to 529 (AGTSRSKGSQGT) shows a compositional bias: polar residues. The tract at residues 518–593 (AGTSRSKGSQ…PRLGWSRDLG (76 aa)) is disordered. Ser-538 is subject to Phosphoserine. The segment covering 543-557 (KKSRGIMRLFGKLRR) has biased composition (basic residues). Phosphoserine is present on residues Ser-560 and Ser-595. 2 consecutive SAM domains span residues 606–670 (WTKE…LGSE) and 678–741 (LDFN…LRIN). A phosphoserine mark is found at Ser-753 and Ser-757. Positions 763–835 (VQQWTNHRVM…ATHFNLLIGA (73 aa)) constitute an SAM 3 domain. A phosphoserine mark is found at Ser-957, Ser-959, and Ser-961. Thr-963 carries the phosphothreonine modification.

This sequence belongs to the liprin family. Liprin-beta subfamily. As to quaternary structure, forms homodimers and heterodimers. Interacts with S100A4 in a Ca(2+)-dependent mode. Part of a cortical microtubule stabilization complex (CMSC) composed of KANK1, PPFIA1, PPFIBP1, ERC1/ELKS, PHLDB2/LL5beta, CLASPs, KIF21A and possibly additional interactors; within CMSCs KANK1 and PHLDB2/LL5beta seem to be the core components for recruiting microtubule-binding proteins KIF21A and CLASPs, whereas PPFIA1, PPFIBP1 and ERC1/ELKS serve as scaffolds for protein clustering. Interacts with KANK1 (via CC1 domain, residues 244-339).

The protein localises to the cytoplasm. It is found in the cell cortex. In terms of biological role, may regulate the disassembly of focal adhesions. Did not bind receptor-like tyrosine phosphatases type 2A. In Mus musculus (Mouse), this protein is Liprin-beta-1 (Ppfibp1).